Reading from the N-terminus, the 547-residue chain is 2-succinyl-5-enolpyruvyl-6-hydroxy-3-cyclohexene-1-carboxylate synthase (547 aa).

Belongs to the TPP enzyme family. MenD subfamily. Homodimer. It depends on Mg(2+) as a cofactor. The cofactor is Mn(2+). Thiamine diphosphate is required as a cofactor.

The enzyme catalyses isochorismate + 2-oxoglutarate + H(+) = 5-enolpyruvoyl-6-hydroxy-2-succinyl-cyclohex-3-ene-1-carboxylate + CO2. It functions in the pathway quinol/quinone metabolism; 1,4-dihydroxy-2-naphthoate biosynthesis; 1,4-dihydroxy-2-naphthoate from chorismate: step 2/7. The protein operates within quinol/quinone metabolism; menaquinone biosynthesis. In terms of biological role, catalyzes the thiamine diphosphate-dependent decarboxylation of 2-oxoglutarate and the subsequent addition of the resulting succinic semialdehyde-thiamine pyrophosphate anion to isochorismate to yield 2-succinyl-5-enolpyruvyl-6-hydroxy-3-cyclohexene-1-carboxylate (SEPHCHC). The protein is 2-succinyl-5-enolpyruvyl-6-hydroxy-3-cyclohexene-1-carboxylate synthase of Mycobacterium sp. (strain KMS).